Here is a 159-residue protein sequence, read N- to C-terminus: 6,7-dimethyl-8-ribityllumazine synthase (159 aa).

Residues Phe23, 58-60, and 82-84 each bind 5-amino-6-(D-ribitylamino)uracil; these read AYE and TII. His90 serves as the catalytic Proton donor. Leu115 lines the 5-amino-6-(D-ribitylamino)uracil pocket. A (2S)-2-hydroxy-3-oxobutyl phosphate-binding site is contributed by Arg129.

The protein belongs to the DMRL synthase family. As to quaternary structure, forms an icosahedral capsid composed of 60 subunits, arranged as a dodecamer of pentamers.

It carries out the reaction (2S)-2-hydroxy-3-oxobutyl phosphate + 5-amino-6-(D-ribitylamino)uracil = 6,7-dimethyl-8-(1-D-ribityl)lumazine + phosphate + 2 H2O + H(+). It functions in the pathway cofactor biosynthesis; riboflavin biosynthesis; riboflavin from 2-hydroxy-3-oxobutyl phosphate and 5-amino-6-(D-ribitylamino)uracil: step 1/2. Its function is as follows. Catalyzes the formation of 6,7-dimethyl-8-ribityllumazine by condensation of 5-amino-6-(D-ribitylamino)uracil with 3,4-dihydroxy-2-butanone 4-phosphate. This is the penultimate step in the biosynthesis of riboflavin. The polypeptide is 6,7-dimethyl-8-ribityllumazine synthase (Blochmanniella floridana).